The chain runs to 153 residues: Superoxide dismutase [Cu-Zn] (153 aa).

The Cu cation site is built by His-45, His-47, and His-62. A disulfide bond links Cys-56 and Cys-145. Zn(2+)-binding residues include His-62, His-70, His-79, and Asp-82. Residue His-119 participates in Cu cation binding.

It belongs to the Cu-Zn superoxide dismutase family. Homodimer. It depends on Cu cation as a cofactor. The cofactor is Zn(2+).

Its subcellular location is the cytoplasm. The enzyme catalyses 2 superoxide + 2 H(+) = H2O2 + O2. Destroys radicals which are normally produced within the cells and which are toxic to biological systems. This Drosophila erecta (Fruit fly) protein is Superoxide dismutase [Cu-Zn].